A 166-amino-acid polypeptide reads, in one-letter code: MTGIRSALPNPASLVESSTHRFLIFDAPNDDNLPLYINELKKYNVSHLVRACDPTYSTEPLQAIGIQVHDMPFADGGSPPDAVVNNWIKILGESYKKDSKETIGIHCVAGLGRAPVLVAIALIEGGMNPLQAVEYIRERRRGSINIKQIQYLKNYKSKKKSSCRIM.

In terms of domain architecture, Tyrosine-protein phosphatase spans 10 to 164 (NPASLVESST…YKSKKKSSCR (155 aa)). A disulfide bridge connects residues Cys52 and Cys107. Asp75 functions as the Proton donor in the catalytic mechanism. The active-site Phosphocysteine intermediate is the Cys107. 108–113 (VAGLGR) is a phosphate binding site. Arg113 contributes to the substrate binding site. Position 163 is a cysteine methyl ester (Cys163). The S-farnesyl cysteine moiety is linked to residue Cys163. Residues 164–166 (RIM) constitute a propeptide, removed in mature form.

The protein belongs to the protein-tyrosine phosphatase family.

The protein resides in the membrane. It catalyses the reaction O-phospho-L-tyrosyl-[protein] + H2O = L-tyrosyl-[protein] + phosphate. The polypeptide is Probable protein tyrosine phosphatase type IVA A (Dictyostelium discoideum (Social amoeba)).